A 129-amino-acid polypeptide reads, in one-letter code: uncharacterized protein (129 aa).

Residues 5 to 25 traverse the membrane as a helical segment; sequence IIGLTLAFFVLFLTAVAILFT.

The protein resides in the membrane. This is an uncharacterized protein from Mycoplasma pneumoniae (strain ATCC 29342 / M129 / Subtype 1) (Mycoplasmoides pneumoniae).